The primary structure comprises 102 residues: MQMVQLQIRVKMIWLLFMNHNHNHNHNQNHNHSHNLNPKKKHHRRGQRSAHRMYGSISPRRKLKWRSMERNTFRYGDIATFLIARLSIGLRVIMEQADFEIT.

Positions 24 to 51 (HNHNQNHNHSHNLNPKKKHHRRGQRSAH) are enriched in basic residues. A disordered region spans residues 24-55 (HNHNQNHNHSHNLNPKKKHHRRGQRSAHRMYG).

This is Transposable element activator uncharacterized 12 kDa protein from Zea mays (Maize).